We begin with the raw amino-acid sequence, 141 residues long: Nucleoside diphosphate kinase (141 aa).

The ATP site is built by Lys9, Phe57, Arg85, Thr91, Arg102, and Asn112. The active-site Pros-phosphohistidine intermediate is the His115.

The protein belongs to the NDK family. Homotetramer. It depends on Mg(2+) as a cofactor.

The protein localises to the cytoplasm. It catalyses the reaction a 2'-deoxyribonucleoside 5'-diphosphate + ATP = a 2'-deoxyribonucleoside 5'-triphosphate + ADP. The catalysed reaction is a ribonucleoside 5'-diphosphate + ATP = a ribonucleoside 5'-triphosphate + ADP. Its function is as follows. Major role in the synthesis of nucleoside triphosphates other than ATP. The ATP gamma phosphate is transferred to the NDP beta phosphate via a ping-pong mechanism, using a phosphorylated active-site intermediate. The chain is Nucleoside diphosphate kinase from Chlamydia trachomatis serovar L2 (strain ATCC VR-902B / DSM 19102 / 434/Bu).